A 784-amino-acid polypeptide reads, in one-letter code: Transcription factor E4F1 (784 aa).

A required for ubiquitin ligase activity region spans residues 41–85 (GFLGLPAPFSEEDEDDVHRCGRCQAEFTALEDFVQHKIQKACQRA). S50 bears the Phosphoserine mark. The tract at residues 184 to 263 (LLVNKDGRYV…GKSFRESGAL (80 aa)) is mediates dimerization, DNA-binding, transcription repression of CCNA2 and interaction with HMGA2. C2H2-type zinc fingers lie at residues 192-214 (YVCALCHKTFKTGSILKAHMVTH) and 220-242 (HECKLCGASFRTKGSLIRHHRRH). A C2H2-type 3; degenerate zinc finger spans residues 248-272 (YKCSKCGKSFRESGALTRHLKSLTP). Residues 369 to 566 (NLLHQAMQNS…REKGSLVRHV (198 aa)) form a mediates interaction with CDKN2A region. 5 consecutive C2H2-type zinc fingers follow at residues 435–457 (HPCPQCSETFPTAATLEAHKRGH), 463–485 (FACAQCGKAFPKAYLLKKHQEVH), 491–513 (FRCGDCGKLYKTIAHVRGHRRVH), 519–541 (YPCPKCGKRYKTKNAQQVHFRTH), and 547–569 (HVCQFCSRGFREKGSLVRHVRHH). The interaction with BMI1 stretch occupies residues 435–599 (HPCPQCSETF…LNRHLRTKGG (165 aa)). Positions 521 to 580 (CPKCGKRYKTKNAQQVHFRTHLEEKPHVCQFCSRGFREKGSLVRHVRHHTGEKPFKCYKC) are mediates interaction with TP53. A C2H2-type 9; degenerate zinc finger spans residues 575 to 597 (FKCYKCGRGFAEHGTLNRHLRTK). Positions 575-597 (FKCYKCGRGFAEHGTLNRHLRTK) are mediates interaction with RASSF1.

As to quaternary structure, homodimer; binds DNA as a dimer. Forms a complex with CDKN2A and TP53. Interactions with TP53, RB1, ANP32A, BMI1 and FHL2 regulate E4F1 activity. Interacts with HDAC1, HMGA2 and RASSF1. (Microbial infection) Interacts with HBV protein X. Post-translationally, proteolytic cleavage produces a 50 kDa N-terminal peptide (p50E4F) which has a DNA-binding activity and activates transcription in presence of the adenoviral E1A protein. The major full-length protein (p120E4F) functions as a repressor of transcription. Phosphorylated; p120E4F and p50E4F are both phosphorylated. Phosphorylation is cell cycle-dependent and differentially regulates DNA-binding activity and function of both forms. In terms of processing, may be sumoylated by UBE2I upon interaction with CDKN2A. In terms of tissue distribution, ubiquitously expressed.

The protein resides in the nucleus. It localises to the nucleoplasm. Its subcellular location is the cytoplasm. The catalysed reaction is S-ubiquitinyl-[E2 ubiquitin-conjugating enzyme]-L-cysteine + [acceptor protein]-L-lysine = [E2 ubiquitin-conjugating enzyme]-L-cysteine + N(6)-ubiquitinyl-[acceptor protein]-L-lysine.. It functions in the pathway protein modification; protein ubiquitination. May function as a transcriptional repressor. May also function as a ubiquitin ligase mediating ubiquitination of chromatin-associated TP53. Functions in cell survival and proliferation through control of the cell cycle. Functions in the p53 and pRB tumor suppressor pathways and regulates the cyclin CCNA2 transcription. Functionally, identified as a cellular target of the adenoviral oncoprotein E1A, it is required for both transcriptional activation and repression of viral genes. The chain is Transcription factor E4F1 (E4F1) from Homo sapiens (Human).